The primary structure comprises 174 residues: ATP-dependent protease subunit HslV (174 aa).

The active site involves T2. The Na(+) site is built by G157, C160, and T163.

It belongs to the peptidase T1B family. HslV subfamily. In terms of assembly, a double ring-shaped homohexamer of HslV is capped on each side by a ring-shaped HslU homohexamer. The assembly of the HslU/HslV complex is dependent on binding of ATP.

The protein resides in the cytoplasm. The catalysed reaction is ATP-dependent cleavage of peptide bonds with broad specificity.. Allosterically activated by HslU binding. In terms of biological role, protease subunit of a proteasome-like degradation complex believed to be a general protein degrading machinery. This Shewanella putrefaciens (strain CN-32 / ATCC BAA-453) protein is ATP-dependent protease subunit HslV.